A 173-amino-acid polypeptide reads, in one-letter code: Helix-loop-helix protein lin-22 (173 aa).

The basic motif stretch occupies residues 21–34 (KKIKNKPLMEKKRR). In terms of domain architecture, bHLH spans 21–78 (KKIKNKPLMEKKRRARINKSLSQLKQILIQDEHKNSIQHSKWEKADILEMAVEYLQQL). The segment at 35–78 (ARINKSLSQLKQILIQDEHKNSIQHSKWEKADILEMAVEYLQQL) is helix-loop-helix motif. Low complexity predominate over residues 83–95 (PCSLSPSTSSIST). The disordered stretch occupies residues 83 to 102 (PCSLSPSTSSISTPPTPKEE).

Expressed mostly in the seam (stem) cells and hypodermis (hyp7), but also to a lesser extent in the intestine.

It is found in the nucleus. Functionally, probable transcription factor. During development, required for cell fate specification, probably by promoting or repressing expression of genes involved in specific cell fate. Involved in specifying lineages derived from the epidermal stem cells of the lateral ectoderm, known as seam cells. Modulates symmetric divisions of seam cells, perhaps in concert with the Wnt signaling pathway. May repress expression of homeobox genes mab-5, egl-5 and lin-39. This is Helix-loop-helix protein lin-22 from Caenorhabditis elegans.